A 397-amino-acid chain; its full sequence is MNIHEYQAKELLRGYGAPVAQGVAIFTSGEAEAAAKKLPGPLYVVKSQIHAGGRGKGKFKELSPDAKGGVRLAKSIEEVVANAKEMLGNTLVTKQTGPEGKQVNRLYIEDGADIARELYLSILIDRTVGRPAFVVSTEGGMDIEAVAEETPEKILTLAIAPERGVTNDDVTKLNAALKLDGAAAKDGETLFPILYKAFTEKDMSLLEVNPLIVMQNGRLRVLDAKVSFDNNALFRHEDVVELRDTSEEDEKEIEASKYDLAYVALDGDIGCMVNGAGLAMATMDIIKLYGAEPANFLDVGGGASKEKVTAAFKIITADPNVKGILVNIFGGIMRCDVIAEGVIAAVKEVGLKVPLVVRLEGTNVDLGKKIISQSGLNVIPADDLDDAAKKIVAAVKS.

Residues 9–254 (KELLRGYGAP…TSEEDEKEIE (246 aa)) form the ATP-grasp domain. ATP is bound by residues lysine 46, 53 to 55 (GRG), glutamate 109, alanine 112, and glutamate 117. Positions 209 and 223 each coordinate Mg(2+). Substrate-binding positions include asparagine 274 and 331 to 333 (GIM).

It belongs to the succinate/malate CoA ligase beta subunit family. Heterotetramer of two alpha and two beta subunits. Requires Mg(2+) as cofactor.

The enzyme catalyses succinate + ATP + CoA = succinyl-CoA + ADP + phosphate. The catalysed reaction is GTP + succinate + CoA = succinyl-CoA + GDP + phosphate. The protein operates within carbohydrate metabolism; tricarboxylic acid cycle; succinate from succinyl-CoA (ligase route): step 1/1. Functionally, succinyl-CoA synthetase functions in the citric acid cycle (TCA), coupling the hydrolysis of succinyl-CoA to the synthesis of either ATP or GTP and thus represents the only step of substrate-level phosphorylation in the TCA. The beta subunit provides nucleotide specificity of the enzyme and binds the substrate succinate, while the binding sites for coenzyme A and phosphate are found in the alpha subunit. The protein is Succinate--CoA ligase [ADP-forming] subunit beta of Chelativorans sp. (strain BNC1).